Consider the following 344-residue polypeptide: Dihydroorotase (344 aa).

The Zn(2+) site is built by histidine 14 and histidine 16. Residues 16 to 18 (HLR) and asparagine 42 each bind substrate. Zn(2+) is bound by residues lysine 99, histidine 136, and histidine 174. The residue at position 99 (lysine 99) is an N6-carboxylysine. Substrate is bound at residue histidine 136. Position 219 (leucine 219) interacts with substrate. Aspartate 247 lines the Zn(2+) pocket. Residue aspartate 247 is part of the active site. 2 residues coordinate substrate: histidine 251 and alanine 263.

It belongs to the metallo-dependent hydrolases superfamily. DHOase family. Class II DHOase subfamily. As to quaternary structure, homodimer. Zn(2+) serves as cofactor.

The catalysed reaction is (S)-dihydroorotate + H2O = N-carbamoyl-L-aspartate + H(+). It functions in the pathway pyrimidine metabolism; UMP biosynthesis via de novo pathway; (S)-dihydroorotate from bicarbonate: step 3/3. In terms of biological role, catalyzes the reversible cyclization of carbamoyl aspartate to dihydroorotate. The protein is Dihydroorotase of Teredinibacter turnerae (strain ATCC 39867 / T7901).